Reading from the N-terminus, the 393-residue chain is MTVSDRWLLPDGVEDILPPLAGRIESLRRDVMDTCQRWGYQLVIPPLIEYLESLFTGTGHDLELQTFKLTDQLTGRMMGVRADMTPQAARIDAHTLGQDGITRLCYAGHVLHTRPRHMLTGRTPIQAGCELFGSGSEAADMEVISLMLETLRVAGLPRLHLDLAHVSIYESLVSDAGFDRDTEAAVFDAMARKSVPELDRLLGECVPGSAGFRLRQLARVSGGVESLADAREILSGASGAIDAALDQLARVADMLNRDFPEVSLGFDFCELRGYNYHTGLVFAAYVPGHGDAVAKGGRYDAIGSDFGRARPATGFSLDIRALVSLGERPFRKAGAIWAPADNDARLEGVISGLRMTETVIRALPDDRETDPSERGCDRQLVNRDGQWVVETIA.

It belongs to the class-II aminoacyl-tRNA synthetase family. HisZ subfamily. As to quaternary structure, heteromultimer composed of HisG and HisZ subunits.

The protein resides in the cytoplasm. The protein operates within amino-acid biosynthesis; L-histidine biosynthesis; L-histidine from 5-phospho-alpha-D-ribose 1-diphosphate: step 1/9. Functionally, required for the first step of histidine biosynthesis. May allow the feedback regulation of ATP phosphoribosyltransferase activity by histidine. The sequence is that of ATP phosphoribosyltransferase regulatory subunit from Marinobacter nauticus (strain ATCC 700491 / DSM 11845 / VT8) (Marinobacter aquaeolei).